The following is a 544-amino-acid chain: Chaperonin GroEL (544 aa).

ATP is bound by residues 29–32 (TLGP), 86–90 (DGTTT), Gly413, 476–478 (NAA), and Asp492.

The protein belongs to the chaperonin (HSP60) family. Forms a cylinder of 14 subunits composed of two heptameric rings stacked back-to-back. Interacts with the co-chaperonin GroES.

It localises to the cytoplasm. It catalyses the reaction ATP + H2O + a folded polypeptide = ADP + phosphate + an unfolded polypeptide.. Together with its co-chaperonin GroES, plays an essential role in assisting protein folding. The GroEL-GroES system forms a nano-cage that allows encapsulation of the non-native substrate proteins and provides a physical environment optimized to promote and accelerate protein folding. This is Chaperonin GroEL from Bacillus cereus (strain B4264).